Reading from the N-terminus, the 112-residue chain is UPF0145 protein Acid_4599 (112 aa).

Belongs to the UPF0145 family.

The chain is UPF0145 protein Acid_4599 from Solibacter usitatus (strain Ellin6076).